Consider the following 150-residue polypeptide: Putative flagella-related protein G (150 aa).

The chain crosses the membrane as a helical span at residues 9–29 (IILFVSVLIITAAVSGILATS).

The protein belongs to the archaeal FlaG family.

The protein resides in the cell membrane. Its subcellular location is the archaeal flagellum. The polypeptide is Putative flagella-related protein G (flaG) (Methanococcus voltae).